The sequence spans 264 residues: Thymidylate synthase (264 aa).

Arg-21 contributes to the dUMP binding site. His-51 serves as a coordination point for (6R)-5,10-methylene-5,6,7,8-tetrahydrofolate. Position 126-127 (126-127 (RR)) interacts with dUMP. The Nucleophile role is filled by Cys-146. Residues 166-169 (RSCD), Asn-177, and 207-209 (HLY) each bind dUMP. Asp-169 provides a ligand contact to (6R)-5,10-methylene-5,6,7,8-tetrahydrofolate. A (6R)-5,10-methylene-5,6,7,8-tetrahydrofolate-binding site is contributed by Ala-263.

It belongs to the thymidylate synthase family. Bacterial-type ThyA subfamily. Homodimer.

It localises to the cytoplasm. It catalyses the reaction dUMP + (6R)-5,10-methylene-5,6,7,8-tetrahydrofolate = 7,8-dihydrofolate + dTMP. The protein operates within pyrimidine metabolism; dTTP biosynthesis. Catalyzes the reductive methylation of 2'-deoxyuridine-5'-monophosphate (dUMP) to 2'-deoxythymidine-5'-monophosphate (dTMP) while utilizing 5,10-methylenetetrahydrofolate (mTHF) as the methyl donor and reductant in the reaction, yielding dihydrofolate (DHF) as a by-product. This enzymatic reaction provides an intracellular de novo source of dTMP, an essential precursor for DNA biosynthesis. The polypeptide is Thymidylate synthase (Salmonella paratyphi C (strain RKS4594)).